The primary structure comprises 375 residues: S-adenosylmethionine:tRNA ribosyltransferase-isomerase (375 aa).

It belongs to the QueA family. In terms of assembly, monomer.

Its subcellular location is the cytoplasm. It carries out the reaction 7-aminomethyl-7-carbaguanosine(34) in tRNA + S-adenosyl-L-methionine = epoxyqueuosine(34) in tRNA + adenine + L-methionine + 2 H(+). It functions in the pathway tRNA modification; tRNA-queuosine biosynthesis. Transfers and isomerizes the ribose moiety from AdoMet to the 7-aminomethyl group of 7-deazaguanine (preQ1-tRNA) to give epoxyqueuosine (oQ-tRNA). The protein is S-adenosylmethionine:tRNA ribosyltransferase-isomerase of Rickettsia typhi (strain ATCC VR-144 / Wilmington).